The primary structure comprises 136 residues: Non-structural protein 1 (136 aa).

This sequence belongs to the pneumovirus non-structural protein 1 family. In terms of assembly, monomer. Homomultimer. Heteromultimer with NS2. Interacts with the matrix protein M. Interacts with host ELOC and CUL2; this interaction allows NS1 to form an active E3 ligase with ELOC and CUL2. Interacts with host IRF3; this interaction leads to the disrupted association of IRF3 with CREBBP and thus reduced binding of IRF3 to the IFN-beta promoter. Interacts with host MAVS; this interaction prevents MAVS binding to RIGI and inhibits signaling pathway leading to interferon production. Interacts with host TRIM25 (via SPRY domain); this interaction suppresses RIGI ubiquitination and results in decreased interaction between RIGI and MAVS.

It localises to the host cytoplasm. It is found in the host mitochondrion. Its subcellular location is the host nucleus. Functionally, plays a major role in antagonizing the type I IFN-mediated antiviral response by degrading or inhibiting multiple cellular factors required for either IFN induction or response pathways. Acts cooperatively with NS2 to repress activation and nuclear translocation of host IFN-regulatory factor IRF3. Also disrupts the association of IRF3 with CREBBP. Interacts with host mitochondrial-associated membrane (MAM) MAVS and prevents the interaction with RIGI. Interacts with TRIM25 to suppress TRIM25-mediated RIGI ubiquitination and thereby RIGI-MAVS interaction. Together with NS2, participates in the proteasomal degradation of host STAT2, IRF3, IRF7, TBK1 and RIGI through a NS-degradasome involving CUL2 and Elongin-C. The degradasome requires an intact mitochondrial MAVS. Decreases the levels of host TRAF3 and IKBKE/IKK-epsilon. As functions other than disruptions of the type I IFN-mediated antiviral signaling pathways, induces host SOCS1 and SOCS3 expression. Suppresses premature apoptosis by an NF-kappa-B-dependent, interferon-independent mechanism and thus facilitates virus growth. Additionally, NS1 may serve some inhibitory role in viral transcription and RNA replication. Suppresses proliferation and activation of host CD103+ CD8+ cytotoxic T-lymphocytes and Th17 helper T-lymphocytes. In Bos taurus (Bovine), this protein is Non-structural protein 1 (1C).